The following is a 312-amino-acid chain: Small ribosomal subunit biogenesis GTPase RsgA (312 aa).

Residues glutamine 86–proline 245 form the CP-type G domain. GTP contacts are provided by residues threonine 135–aspartate 138 and glycine 187–serine 195. Positions 270, 275, 277, and 283 each coordinate Zn(2+).

It belongs to the TRAFAC class YlqF/YawG GTPase family. RsgA subfamily. In terms of assembly, monomer. Associates with 30S ribosomal subunit, binds 16S rRNA. Zn(2+) is required as a cofactor.

The protein localises to the cytoplasm. Functionally, one of several proteins that assist in the late maturation steps of the functional core of the 30S ribosomal subunit. Helps release RbfA from mature subunits. May play a role in the assembly of ribosomal proteins into the subunit. Circularly permuted GTPase that catalyzes slow GTP hydrolysis, GTPase activity is stimulated by the 30S ribosomal subunit. In Prochlorococcus marinus (strain NATL2A), this protein is Small ribosomal subunit biogenesis GTPase RsgA.